The following is a 1374-amino-acid chain: DNA-directed RNA polymerase subunit beta (1374 aa).

Belongs to the RNA polymerase beta chain family. The RNAP catalytic core consists of 2 alpha, 1 beta, 1 beta' and 1 omega subunit. When a sigma factor is associated with the core the holoenzyme is formed, which can initiate transcription.

The enzyme catalyses RNA(n) + a ribonucleoside 5'-triphosphate = RNA(n+1) + diphosphate. Functionally, DNA-dependent RNA polymerase catalyzes the transcription of DNA into RNA using the four ribonucleoside triphosphates as substrates. This is DNA-directed RNA polymerase subunit beta from Methylobacterium radiotolerans (strain ATCC 27329 / DSM 1819 / JCM 2831 / NBRC 15690 / NCIMB 10815 / 0-1).